Reading from the N-terminus, the 250-residue chain is DNA repair protein RecO (250 aa).

The protein belongs to the RecO family.

Functionally, involved in DNA repair and RecF pathway recombination. In Rhodospirillum centenum (strain ATCC 51521 / SW), this protein is DNA repair protein RecO.